We begin with the raw amino-acid sequence, 295 residues long: Thioredoxin-related transmembrane protein 2 (295 aa).

The first 48 residues, 1–48 (MAVLAPLIALVYSVPRLSRWLARPYCLLSALLSIAFLLVRKLPPICNG), serve as a signal peptide directing secretion. The Extracellular portion of the chain corresponds to 49 to 102 (LPTQREDGNPCDFDWREVEILMFLSAIVMMKNRRSITVEQHVGNIFMFSKVANA). Residues 103–125 (ILFFRLDIRMGLLYLTLCIVFLM) traverse the membrane as a helical segment. Positions 114-269 (LLYLTLCIVF…LYQRAKKLSK (156 aa)) constitute a Thioredoxin domain. Topologically, residues 126 to 295 (TCKPPLYMGP…VPDGENKKDK (170 aa)) are cytoplasmic. Phosphoserine occurs at positions 211 and 243. Residues 266–295 (KLSKGGDMSEEKPGNPTPTAVPDGENKKDK) are disordered. The short motif at 292–295 (KKDK) is the Di-lysine motif element.

Monomer. Homodimer; disulfide-linked. Occurs in both reduced and oxidized monomeric form. Oxidative conditions increase homodimerization. Interacts with CANX. Interacts with ATP2A2.

The protein resides in the endoplasmic reticulum membrane. It is found in the mitochondrion membrane. Endoplasmic reticulum and mitochondria-associated protein that probably functions as a regulator of cellular redox state and thereby regulates protein post-translational modification, protein folding and mitochondrial activity. Indirectly regulates neuronal proliferation, migration, and organization in the developing brain. In Rattus norvegicus (Rat), this protein is Thioredoxin-related transmembrane protein 2 (Tmx2).